We begin with the raw amino-acid sequence, 176 residues long: ATP-dependent protease subunit HslV (176 aa).

The active site involves Thr-2. Residues Gly-157, Cys-160, and Thr-163 each contribute to the Na(+) site.

Belongs to the peptidase T1B family. HslV subfamily. In terms of assembly, a double ring-shaped homohexamer of HslV is capped on each side by a ring-shaped HslU homohexamer. The assembly of the HslU/HslV complex is dependent on binding of ATP.

The protein localises to the cytoplasm. The catalysed reaction is ATP-dependent cleavage of peptide bonds with broad specificity.. Allosterically activated by HslU binding. Functionally, protease subunit of a proteasome-like degradation complex believed to be a general protein degrading machinery. The chain is ATP-dependent protease subunit HslV from Erwinia tasmaniensis (strain DSM 17950 / CFBP 7177 / CIP 109463 / NCPPB 4357 / Et1/99).